The following is a 367-amino-acid chain: Uroporphyrinogen decarboxylase (367 aa).

At methionine 1 the chain carries N-acetylmethionine. Arginine 37, alanine 39, arginine 41, arginine 50, aspartate 86, tyrosine 164, serine 219, and histidine 339 together coordinate coproporphyrinogen I. Residues arginine 37, alanine 39, and arginine 41 each contribute to the coproporphyrinogen III site. Aspartate 86, tyrosine 164, serine 219, and histidine 339 together coordinate coproporphyrinogen III.

Belongs to the uroporphyrinogen decarboxylase family. In terms of assembly, homodimer.

Its subcellular location is the cytoplasm. It is found in the cytosol. The catalysed reaction is uroporphyrinogen III + 4 H(+) = coproporphyrinogen III + 4 CO2. It carries out the reaction uroporphyrinogen I + 4 H(+) = coproporphyrinogen I + 4 CO2. It functions in the pathway porphyrin-containing compound metabolism; protoporphyrin-IX biosynthesis; coproporphyrinogen-III from 5-aminolevulinate: step 4/4. In terms of biological role, catalyzes the sequential decarboxylation of the four acetate side chains of uroporphyrinogen to form coproporphyrinogen and participates in the fifth step in the heme biosynthetic pathway. Isomer I or isomer III of uroporphyrinogen may serve as substrate, but only coproporphyrinogen III can ultimately be converted to heme. In vitro also decarboxylates pentacarboxylate porphyrinogen I. The protein is Uroporphyrinogen decarboxylase of Ovis aries (Sheep).